We begin with the raw amino-acid sequence, 496 residues long: Palmitoleoyl-protein carboxylesterase NOTUM (496 aa).

The signal sequence occupies residues 1-19 (MGRGVRVLLLLSLLHCAGG). Residues 21 to 46 (EGRKTWRRRGQQPPPPPRTEAAPAAG) form a disordered region. A Phosphoserine; by FAM20C modification is found at serine 81. N-linked (GlcNAc...) asparagine glycosylation is present at asparagine 96. Residues serine 232, aspartate 340, and histidine 389 each act as charge relay system in the active site.

Belongs to the pectinacetylesterase family. Notum subfamily. Rarely expressed in adult normal tissues.

Its subcellular location is the secreted. The catalysed reaction is [Wnt protein]-O-(9Z)-hexadecenoyl-L-serine + H2O = [Wnt protein]-L-serine + (9Z)-hexadecenoate + H(+). Functionally, carboxylesterase that acts as a key negative regulator of the Wnt signaling pathway by specifically mediating depalmitoleoylation of WNT proteins. Serine palmitoleoylation of WNT proteins is required for efficient binding to frizzled receptors. The protein is Palmitoleoyl-protein carboxylesterase NOTUM of Homo sapiens (Human).